A 433-amino-acid chain; its full sequence is Glutamate-1-semialdehyde 2,1-aminomutase (433 aa).

K266 is subject to N6-(pyridoxal phosphate)lysine.

Belongs to the class-III pyridoxal-phosphate-dependent aminotransferase family. HemL subfamily. In terms of assembly, homodimer. The cofactor is pyridoxal 5'-phosphate.

Its subcellular location is the cytoplasm. The catalysed reaction is (S)-4-amino-5-oxopentanoate = 5-aminolevulinate. Its pathway is porphyrin-containing compound metabolism; protoporphyrin-IX biosynthesis; 5-aminolevulinate from L-glutamyl-tRNA(Glu): step 2/2. This Psychrobacter cryohalolentis (strain ATCC BAA-1226 / DSM 17306 / VKM B-2378 / K5) protein is Glutamate-1-semialdehyde 2,1-aminomutase.